The following is a 282-amino-acid chain: Chromatin modification-related protein YNG2 (282 aa).

The stretch at 35-86 forms a coiled coil; that stretch reads LIEEKKKYEQKESQIHKFIRQQGSIPKHPQEDGLDKEIKESLLKCQSLQREK. Positions 123–217 are disordered; sequence DGDMDSAAEA…KGQNGSPENE (95 aa). The segment covering 129–143 has biased composition (low complexity); the sequence is AAEASRESSVVSNSS. A Phosphoserine modification is found at Ser-183. Phosphothreonine is present on Thr-185. Ser-188 carries the phosphoserine modification. Over residues 191-203 the composition is skewed to basic and acidic residues; sequence IEKKIARTKEFKN. The segment covering 204 to 214 has biased composition (polar residues); that stretch reads SRNGKGQNGSP. Residues 222-271 form a PHD-type zinc finger; the sequence is TLYCFCQRVSFGEMVACDGPNCKYEWFHYDCVNLKEPPKGTWYCPECKIE. Zn(2+)-binding residues include Cys-225, Cys-227, Cys-238, Cys-243, His-249, Cys-252, Cys-265, and Cys-268.

It belongs to the ING family. Interacts with H3K4me3 and to a lesser extent with H3K4me2. Component of the NuA4 histone acetyltransferase complex composed of at least ACT1, ARP4, YAF9, VID21, SWC4, EAF3, EAF5, EAF6, EAF7, EPL1, ESA1, TRA1 and YNG2.

The protein resides in the nucleus. Component of the NuA4 histone acetyltransferase complex which is involved in transcriptional activation of selected genes principally by acetylation of nucleosomal histone H4 and H2A. The NuA4 complex is also involved in DNA repair. Involved in cell cycle progression and meiosis. The chain is Chromatin modification-related protein YNG2 (YNG2) from Saccharomyces cerevisiae (strain ATCC 204508 / S288c) (Baker's yeast).